The chain runs to 285 residues: Glutamate racemase (285 aa).

Substrate is bound by residues D28–S29 and Y60–G61. C92 functions as the Proton donor/acceptor in the catalytic mechanism. Position 93–94 (N93–T94) interacts with substrate. Catalysis depends on C204, which acts as the Proton donor/acceptor. T205–H206 is a binding site for substrate.

Belongs to the aspartate/glutamate racemases family.

It catalyses the reaction L-glutamate = D-glutamate. It functions in the pathway cell wall biogenesis; peptidoglycan biosynthesis. Its function is as follows. Provides the (R)-glutamate required for cell wall biosynthesis. The polypeptide is Glutamate racemase (Escherichia coli O7:K1 (strain IAI39 / ExPEC)).